The primary structure comprises 218 residues: Cytidylate kinase (218 aa).

7 to 15 lines the ATP pocket; that stretch reads GPSASGKSS.

It belongs to the cytidylate kinase family. Type 1 subfamily.

It is found in the cytoplasm. The enzyme catalyses CMP + ATP = CDP + ADP. The catalysed reaction is dCMP + ATP = dCDP + ADP. This Borrelia hermsii (strain HS1 / DAH) protein is Cytidylate kinase.